The sequence spans 108 residues: Thioredoxin (108 aa).

The region spanning 2 to 108 is the Thioredoxin domain; that stretch reads NKIIELTDQN…LKDFLDENIK (107 aa). Residues Cys32 and Cys35 are joined by a disulfide bond.

This sequence belongs to the thioredoxin family.

Participates in various redox reactions through the reversible oxidation of its active center dithiol to a disulfide and catalyzes dithiol-disulfide exchange reactions. The chain is Thioredoxin (trxA) from Buchnera aphidicola subsp. Schizaphis graminum (strain Sg).